The following is a 435-amino-acid chain: Diaminobutyrate--2-oxoglutarate transaminase (435 aa).

Position 266 is an N6-(pyridoxal phosphate)lysine (Lys266).

Belongs to the class-III pyridoxal-phosphate-dependent aminotransferase family. Requires pyridoxal 5'-phosphate as cofactor.

It carries out the reaction L-2,4-diaminobutanoate + 2-oxoglutarate = L-aspartate 4-semialdehyde + L-glutamate. It functions in the pathway amine and polyamine biosynthesis; ectoine biosynthesis; L-ectoine from L-aspartate 4-semialdehyde: step 1/3. Its function is as follows. Catalyzes reversively the conversion of L-aspartate beta-semialdehyde (ASA) to L-2,4-diaminobutyrate (DABA) by transamination with L-glutamate. The polypeptide is Diaminobutyrate--2-oxoglutarate transaminase (ectB) (Bordetella bronchiseptica (strain ATCC BAA-588 / NCTC 13252 / RB50) (Alcaligenes bronchisepticus)).